The chain runs to 410 residues: Protein translocase subunit SecY 2 (410 aa).

10 helical membrane-spanning segments follow: residues 2–22 (ILIIYRALFFVTIPGVNSAAL), 45–65 (FSIMSLGVTAYITAQIIVQLL), 94–114 (LTLVLGLVQATGITLGINTLT), 125–145 (FTIIVIAVSMTAGSFIAMWLG), 147–167 (LITENGLGNGISVIITAGILV), 188–208 (WIRFSELMIGAAILILLIVWF), 241–261 (VIPVIFASTIMTIPQTILMFF), 284–304 (GVIIYGLMIIFFEYLYSIVQI), 339–359 (YLSLPGSLFLMLVSIIPLLVA), and 366–386 (LQIGLSGSSILIITGVLIEIG).

Belongs to the SecY/SEC61-alpha family. As to quaternary structure, component of the Sec protein translocase complex. Heterotrimer consisting of SecY, SecE and SecG subunits. The heterotrimers can form oligomers, although 1 heterotrimer is thought to be able to translocate proteins. Interacts with the ribosome. Interacts with SecDF, and other proteins may be involved. Interacts with SecA.

The protein localises to the cell membrane. Its function is as follows. The central subunit of the protein translocation channel SecYEG. Consists of two halves formed by TMs 1-5 and 6-10. These two domains form a lateral gate at the front which open onto the bilayer between TMs 2 and 7, and are clamped together by SecE at the back. The channel is closed by both a pore ring composed of hydrophobic SecY resides and a short helix (helix 2A) on the extracellular side of the membrane which forms a plug. The plug probably moves laterally to allow the channel to open. The ring and the pore may move independently. In Lactobacillus kefiranofaciens subsp. kefiranofaciens, this protein is Protein translocase subunit SecY 2.